The sequence spans 80 residues: Exodeoxyribonuclease 7 small subunit (80 aa).

Belongs to the XseB family. As to quaternary structure, heterooligomer composed of large and small subunits.

The protein resides in the cytoplasm. It catalyses the reaction Exonucleolytic cleavage in either 5'- to 3'- or 3'- to 5'-direction to yield nucleoside 5'-phosphates.. Its function is as follows. Bidirectionally degrades single-stranded DNA into large acid-insoluble oligonucleotides, which are then degraded further into small acid-soluble oligonucleotides. This is Exodeoxyribonuclease 7 small subunit from Pseudomonas paraeruginosa (strain DSM 24068 / PA7) (Pseudomonas aeruginosa (strain PA7)).